A 231-amino-acid polypeptide reads, in one-letter code: Thiamine import ATP-binding protein ThiQ (231 aa).

The ABC transporter domain maps to 2-230; sequence LHLDRLLIRQ…PPPALRAYLG (229 aa). Position 32–39 (32–39) interacts with ATP; that stretch reads GPSGGGKS.

The protein belongs to the ABC transporter superfamily. Thiamine importer (TC 3.A.1.19.1) family. As to quaternary structure, the complex is composed of two ATP-binding proteins (ThiQ), two transmembrane proteins (ThiP) and a solute-binding protein (ThiB).

It localises to the cell inner membrane. It catalyses the reaction thiamine(out) + ATP + H2O = thiamine(in) + ADP + phosphate + H(+). Part of the ABC transporter complex ThiBPQ involved in thiamine import. Responsible for energy coupling to the transport system. The protein is Thiamine import ATP-binding protein ThiQ of Cereibacter sphaeroides (strain ATCC 17023 / DSM 158 / JCM 6121 / CCUG 31486 / LMG 2827 / NBRC 12203 / NCIMB 8253 / ATH 2.4.1.) (Rhodobacter sphaeroides).